Here is a 122-residue protein sequence, read N- to C-terminus: MIQKETNLVVADNSGAKKVRCIHVFGGTGRRYASLGDQIIVSVKAAVPGGIVKKKDVCRAVVVRCVKESRRKDGSYIRFDENAVVLLNAQGEPRGTRIFGPVARELRDRKFMKIVSLAPEVL.

It belongs to the universal ribosomal protein uL14 family. In terms of assembly, part of the 50S ribosomal subunit. Forms a cluster with proteins L3 and L19. In the 70S ribosome, L14 and L19 interact and together make contacts with the 16S rRNA in bridges B5 and B8.

Functionally, binds to 23S rRNA. Forms part of two intersubunit bridges in the 70S ribosome. This Pelodictyon phaeoclathratiforme (strain DSM 5477 / BU-1) protein is Large ribosomal subunit protein uL14.